Reading from the N-terminus, the 90-residue chain is Cell division protein CrgA (90 aa).

Residues 1–25 (MPKARVTKNETAPVSSNPSANRTPV) form a disordered region. Residues 9 to 22 (NETAPVSSNPSANR) show a composition bias toward polar residues. The next 2 membrane-spanning stretches (helical) occupy residues 38 to 58 (VIMFAFMIVGLAWLIINYLVG) and 67 to 87 (LGAWNYGIGFGLMIIGLLMTM).

It belongs to the CrgA family.

The protein localises to the cell membrane. Involved in cell division. This Corynebacterium glutamicum (strain ATCC 13032 / DSM 20300 / JCM 1318 / BCRC 11384 / CCUG 27702 / LMG 3730 / NBRC 12168 / NCIMB 10025 / NRRL B-2784 / 534) protein is Cell division protein CrgA.